We begin with the raw amino-acid sequence, 313 residues long: 4-diphosphocytidyl-2-C-methyl-D-erythritol kinase (313 aa).

K27 is a catalytic residue. Residue 110 to 120 (PIGGGVGGGSS) coordinates ATP. D152 is a catalytic residue.

It belongs to the GHMP kinase family. IspE subfamily.

The catalysed reaction is 4-CDP-2-C-methyl-D-erythritol + ATP = 4-CDP-2-C-methyl-D-erythritol 2-phosphate + ADP + H(+). Its pathway is isoprenoid biosynthesis; isopentenyl diphosphate biosynthesis via DXP pathway; isopentenyl diphosphate from 1-deoxy-D-xylulose 5-phosphate: step 3/6. Its function is as follows. Catalyzes the phosphorylation of the position 2 hydroxy group of 4-diphosphocytidyl-2C-methyl-D-erythritol. The chain is 4-diphosphocytidyl-2-C-methyl-D-erythritol kinase from Histophilus somni (strain 129Pt) (Haemophilus somnus).